Reading from the N-terminus, the 475-residue chain is Adenylyl cyclase-associated protein 1 (475 aa).

At Ala2 the chain carries N-acetylalanine. Residue Tyr31 is modified to Phosphotyrosine. At Ser34 the chain carries Phosphoserine. An N6-acetyllysine modification is found at Lys81. Disordered stretches follow at residues 216 to 237 (ELSG…PPCP) and 278 to 319 (MKTH…KKEP). A compositionally biased stretch (low complexity) spans 218–228 (SGLPSGPSAGS). An N6-methyllysine modification is found at Lys287. Phosphoserine is present on residues Ser290, Ser295, and Ser301. Thr307 is modified (phosphothreonine). Ser308 and Ser310 each carry phosphoserine. One can recognise a C-CAP/cofactor C-like domain in the interval 319–453 (PAVLELEGKK…EGGDFNEFPV (135 aa)). Lys348 participates in a covalent cross-link: Glycyl lysine isopeptide (Lys-Gly) (interchain with G-Cter in SUMO1).

It belongs to the CAP family. In terms of assembly, homodimer. Binds actin monomers.

It is found in the cell membrane. In terms of biological role, directly regulates filament dynamics and has been implicated in a number of complex developmental and morphological processes, including mRNA localization and the establishment of cell polarity. The sequence is that of Adenylyl cyclase-associated protein 1 (CAP1) from Homo sapiens (Human).